A 233-amino-acid chain; its full sequence is Syntaxin-52 (233 aa).

Topologically, residues 1–209 (MASSSDPWMR…NKSMKSGCSC (209 aa)) are cytoplasmic. A t-SNARE coiled-coil homology domain is found at 137-199 (RQVMREQDEG…RRVQKSLALM (63 aa)). The chain crosses the membrane as a helical; Anchor for type IV membrane protein span at residues 210 to 230 (MSMLLSVLGIVGLALVIWLLV). The Vesicular portion of the chain corresponds to 231–233 (KYL).

Belongs to the syntaxin family. In terms of assembly, interacts either with VTI11 and SYP21, or with VTI11 and SYP22 in the prevacuolar compartment, or with VTI12 and SYP61 in the trans-Golgi network to form t-SNARE complexes. As to expression, expressed in root, leaf, stem, flower and silique.

It is found in the golgi apparatus. Its subcellular location is the trans-Golgi network membrane. The protein resides in the prevacuolar compartment membrane. Vesicle trafficking protein that functions in the secretory pathway. This Arabidopsis thaliana (Mouse-ear cress) protein is Syntaxin-52 (SYP52).